Consider the following 331-residue polypeptide: Ketol-acid reductoisomerase (NADP(+)) (331 aa).

In terms of domain architecture, KARI N-terminal Rossmann spans 2–181 (TKVYYEDAVK…GATRAGVIET (180 aa)). NADP(+)-binding positions include 25-28 (YGSQ), Arg48, Ser52, and 82-85 (DETQ). His107 is an active-site residue. Residue Gly133 participates in NADP(+) binding. One can recognise a KARI C-terminal knotted domain in the interval 182–327 (TFKEETETDL…AELREMMPFV (146 aa)). Positions 190, 194, 226, and 230 each coordinate Mg(2+). Ser251 provides a ligand contact to substrate.

The protein belongs to the ketol-acid reductoisomerase family. Requires Mg(2+) as cofactor.

It catalyses the reaction (2R)-2,3-dihydroxy-3-methylbutanoate + NADP(+) = (2S)-2-acetolactate + NADPH + H(+). The catalysed reaction is (2R,3R)-2,3-dihydroxy-3-methylpentanoate + NADP(+) = (S)-2-ethyl-2-hydroxy-3-oxobutanoate + NADPH + H(+). Its pathway is amino-acid biosynthesis; L-isoleucine biosynthesis; L-isoleucine from 2-oxobutanoate: step 2/4. The protein operates within amino-acid biosynthesis; L-valine biosynthesis; L-valine from pyruvate: step 2/4. Involved in the biosynthesis of branched-chain amino acids (BCAA). Catalyzes an alkyl-migration followed by a ketol-acid reduction of (S)-2-acetolactate (S2AL) to yield (R)-2,3-dihydroxy-isovalerate. In the isomerase reaction, S2AL is rearranged via a Mg-dependent methyl migration to produce 3-hydroxy-3-methyl-2-ketobutyrate (HMKB). In the reductase reaction, this 2-ketoacid undergoes a metal-dependent reduction by NADPH to yield (R)-2,3-dihydroxy-isovalerate. This chain is Ketol-acid reductoisomerase (NADP(+)), found in Listeria innocua serovar 6a (strain ATCC BAA-680 / CLIP 11262).